Consider the following 411-residue polypeptide: Epoxyqueuosine reductase (411 aa).

The active-site Proton donor is the aspartate 171. In terms of domain architecture, 4Fe-4S ferredoxin-type spans leucine 213–threonine 245. Residues cysteine 225, cysteine 228, cysteine 231, cysteine 235, cysteine 251, cysteine 278, cysteine 281, and cysteine 285 each contribute to the [4Fe-4S] cluster site.

It belongs to the QueG family. In terms of assembly, monomer. Requires cob(II)alamin as cofactor. It depends on [4Fe-4S] cluster as a cofactor.

It is found in the cytoplasm. It carries out the reaction epoxyqueuosine(34) in tRNA + AH2 = queuosine(34) in tRNA + A + H2O. Its pathway is tRNA modification; tRNA-queuosine biosynthesis. Catalyzes the conversion of epoxyqueuosine (oQ) to queuosine (Q), which is a hypermodified base found in the wobble positions of tRNA(Asp), tRNA(Asn), tRNA(His) and tRNA(Tyr). This is Epoxyqueuosine reductase from Yersinia pestis.